The chain runs to 273 residues: Probable membrane transporter protein YunE (273 aa).

8 helical membrane passes run 3 to 23 (FVIL…IGLG), 50 to 70 (AIGT…LAYI), 81 to 101 (LIFF…SKLF), 105 to 125 (SFSV…MLKA), 157 to 177 (VGIA…IGGG), 185 to 205 (MLLF…IIFL), 222 to 242 (WLYA…GAAI), and 251 to 271 (IVMI…YEGI).

Belongs to the 4-toluene sulfonate uptake permease (TSUP) (TC 2.A.102) family.

It localises to the cell membrane. This is Probable membrane transporter protein YunE (yunE) from Bacillus subtilis (strain 168).